The sequence spans 501 residues: Cytoplasmic tRNA 2-thiolation protein 2 (501 aa).

Over residues Met1–Ala12 the composition is skewed to basic and acidic residues. 2 disordered regions span residues Met1–Thr23 and Gly192–Ala214. Position 2 is an N-acetylcysteine (Cys2). Position 492 is a phosphoserine (Ser492).

This sequence belongs to the CTU2/NCS2 family. As to quaternary structure, component of a complex at least composed of URM1, CTU2/NCS2 and CTU1/ATPBD3.

Its subcellular location is the cytoplasm. The protein operates within tRNA modification; 5-methoxycarbonylmethyl-2-thiouridine-tRNA biosynthesis. Plays a central role in 2-thiolation of mcm(5)S(2)U at tRNA wobble positions of tRNA(Lys), tRNA(Glu) and tRNA(Gln). May act by forming a heterodimer with CTU1/ATPBD3 that ligates sulfur from thiocarboxylated URM1 onto the uridine of tRNAs at wobble position. The protein is Cytoplasmic tRNA 2-thiolation protein 2 of Bos taurus (Bovine).